We begin with the raw amino-acid sequence, 59 residues long: uncharacterized protein (59 aa).

Residues 1–59 (MAKKPGENTGKNGGIYQEVGPRGGKKDNFATVKDNERLPPTTKPGNGWVLDKRTPDSKK) form a disordered region. Basic and acidic residues-rich tracts occupy residues 24–37 (GKKD…DNER) and 50–59 (LDKRTPDSKK).

This is an uncharacterized protein from Salmonella phage P22 (Bacteriophage P22).